Consider the following 878-residue polypeptide: RNA-directed RNA polymerase (878 aa).

Residue 258-265 coordinates GTP; that stretch reads GLPYVGRT. The RdRp catalytic domain maps to 397–597; sequence LVYADNIYIV…DKERLFCSAA (201 aa). Residues 845 to 878 are disordered; that stretch reads GAGTSRPMGMEAPTRSKNAVKMAKRAQRQKESRQ.

As to quaternary structure, interacts with VP3 in the cytoplasm. Post-translationally, may exist in multiple phosphorylated forms.

It localises to the virion. It carries out the reaction RNA(n) + a ribonucleoside 5'-triphosphate = RNA(n+1) + diphosphate. Functionally, RNA-dependent RNA polymerase which is found both free and covalently attached to the genomic RNA. May also contain guanylyl and methyl transferase activities. The chain is RNA-directed RNA polymerase (VP1) from Gallus gallus (Chicken).